The sequence spans 306 residues: Manganese transport system membrane protein MntB (306 aa).

Topologically, residues 1–25 are periplasmic; the sequence is MNQLVVAFPFWHWLVEPLQYEFLIR. Residues 26-46 traverse the membrane as a helical segment; it reads AIWVSAFVGLVCAVLSCYITL. The Cytoplasmic segment spans residues 47 to 48; the sequence is KG. Residues 49-69 form a helical membrane-spanning segment; that stretch reads WSLMGDAISHAVVPGVVLAYA. The Periplasmic segment spans residues 70 to 71; the sequence is LN. The chain crosses the membrane as a helical span at residues 72–92; it reads IPFAIGAFTFGFGATVAIGYV. Residues 93-101 are Cytoplasmic-facing; the sequence is KSKTRLKED. A helical transmembrane segment spans residues 102-122; sequence AVIGIVFTGFFALGLVLVTKI. Residues 123 to 141 lie on the Periplasmic side of the membrane; it reads PSNVDLFHILFGNVLGISQ. A helical transmembrane segment spans residues 142 to 162; sequence QDIIQTLIAGSITLIVILLRR. Over 163–179 the chain is Cytoplasmic; that stretch reads KDLLLFCFDPNHAKAIG. A helical transmembrane segment spans residues 180–200; it reads LRTQVMYYTLLSVLALTIVAA. The Periplasmic segment spans residues 201 to 202; sequence LQ. A helical membrane pass occupies residues 203–223; the sequence is TAGIILVISMLVTPGSIGYLL. At 224 to 228 the chain is on the cytoplasmic side; that stretch reads SDRFD. A helical transmembrane segment spans residues 229-249; the sequence is HMLWYSVVSSVLSCVLGTYLS. Residues 250 to 255 lie on the Periplasmic side of the membrane; it reads YHFDVS. The chain crosses the membrane as a helical span at residues 256-276; sequence TGGMIVVILTTLFVIAMIGAP. Residues 277–306 lie on the Cytoplasmic side of the membrane; it reads KYGILAQEWRKRSGPNPEDDENQTVVVDQV.

This sequence belongs to the ABC-3 integral membrane protein family.

Its subcellular location is the cell membrane. Part of an ATP-driven transport system for manganese. This Synechocystis sp. (strain ATCC 27184 / PCC 6803 / Kazusa) protein is Manganese transport system membrane protein MntB (mntB).